A 202-amino-acid polypeptide reads, in one-letter code: Small ribosomal subunit protein uS4 (202 aa).

A compositionally biased stretch (basic residues) spans 1–13 (MSRYRGPRLRITR). Residues 1–43 (MSRYRGPRLRITRRLGDLPGLTRKAAKRSHPPGQHGQARRKRS) form a disordered region. Residues 90-152 (NRLDNVCFRL…KASKQLAQAN (63 aa)) form the S4 RNA-binding domain.

The protein belongs to the universal ribosomal protein uS4 family. In terms of assembly, part of the 30S ribosomal subunit. Contacts protein S5. The interaction surface between S4 and S5 is involved in control of translational fidelity.

Its function is as follows. One of the primary rRNA binding proteins, it binds directly to 16S rRNA where it nucleates assembly of the body of the 30S subunit. With S5 and S12 plays an important role in translational accuracy. This is Small ribosomal subunit protein uS4 from Prochlorococcus marinus (strain NATL2A).